The sequence spans 152 residues: Xanthine-guanine phosphoribosyltransferase (152 aa).

5-phospho-alpha-D-ribose 1-diphosphate contacts are provided by residues arginine 37–glycine 38, arginine 69, and aspartate 88–threonine 96. Arginine 69 is a binding site for GMP. Aspartate 89 provides a ligand contact to Mg(2+). Guanine contacts are provided by aspartate 92 and isoleucine 135. Residues aspartate 92 and isoleucine 135 each coordinate xanthine. GMP is bound by residues aspartate 92–threonine 96 and tryptophan 134–isoleucine 135.

It belongs to the purine/pyrimidine phosphoribosyltransferase family. XGPT subfamily. Homotetramer. Mg(2+) serves as cofactor.

The protein localises to the cell inner membrane. The catalysed reaction is GMP + diphosphate = guanine + 5-phospho-alpha-D-ribose 1-diphosphate. It carries out the reaction XMP + diphosphate = xanthine + 5-phospho-alpha-D-ribose 1-diphosphate. The enzyme catalyses IMP + diphosphate = hypoxanthine + 5-phospho-alpha-D-ribose 1-diphosphate. It participates in purine metabolism; GMP biosynthesis via salvage pathway; GMP from guanine: step 1/1. It functions in the pathway purine metabolism; XMP biosynthesis via salvage pathway; XMP from xanthine: step 1/1. Its function is as follows. Purine salvage pathway enzyme that catalyzes the transfer of the ribosyl-5-phosphate group from 5-phospho-alpha-D-ribose 1-diphosphate (PRPP) to the N9 position of the 6-oxopurines guanine and xanthine to form the corresponding ribonucleotides GMP (guanosine 5'-monophosphate) and XMP (xanthosine 5'-monophosphate), with the release of PPi. To a lesser extent, also acts on hypoxanthine. The polypeptide is Xanthine-guanine phosphoribosyltransferase (Salmonella choleraesuis (strain SC-B67)).